Reading from the N-terminus, the 216-residue chain is Cytidylate kinase (216 aa).

Residue glycine 7–threonine 15 coordinates ATP.

This sequence belongs to the cytidylate kinase family. Type 1 subfamily.

The protein localises to the cytoplasm. It carries out the reaction CMP + ATP = CDP + ADP. The enzyme catalyses dCMP + ATP = dCDP + ADP. The protein is Cytidylate kinase of Chlamydia trachomatis serovar L2 (strain ATCC VR-902B / DSM 19102 / 434/Bu).